A 445-amino-acid chain; its full sequence is NSARADLCVALAKHTGMSPERMMVADVFSHRFYKIYQLEESLSSILDRDDIFIYEVSGRSAIGENSREDVVLPIYLRERTPARDYNNSYYGLMLFGHPLLVSVPRDRLSWDALYHILLYRLSRYVTRPSSDDEDDGDEKDIEDKDNIPKPGHVAGASSQDSGAGSGGAQLWSRRRKPAPVDNSPGPSHWPQRARRKHLFTLQTVNSNGTSDRSTFNEDTHAQPYIAIDWEPEMKKRYYDEVEAEGYVKHDCVGYVLKKAPVRLQECIELFTTVETLEKENPWFCPTCKQHQLATKKLDLWMLPETLIIHLKRFSYTKFSREKLDTLVEFPIRDLDFSEFVIKPQNESAPELYKYDLIAVSNHYGGLRDGHYTTFACNKDSGQSDYFDDNSVSPVTENQIESKAAYVLFYQRQDVARRLQPQPSSSDPPASPACGSPPNSEFMDVN.

Residues 1–412 (NSARADLCVA…AAYVLFYQRQ (412 aa)) enclose the USP domain. A disordered region spans residues 127–194 (RPSSDDEDDG…GPSHWPQRAR (68 aa)). S130 is subject to Phosphoserine. The span at 131-140 (DDEDDGDEKD) shows a compositional bias: acidic residues. The active-site Nucleophile is the H362. H370 acts as the Proton acceptor in catalysis. A disordered region spans residues 416–445 (RRLQPQPSSSDPPASPACGSPPNSEFMDVN). Low complexity predominate over residues 420–439 (PQPSSSDPPASPACGSPPNS). At S430 the chain carries Phosphoserine.

The protein belongs to the peptidase C19 family. In terms of assembly, monomer. Interacts with RANBP9/RANBPM. Interacts with BRCA2. Interacts with CHUK/IKKA. Interacts with NFKBIA. Associated component of the Polycomb group (PcG) multiprotein PRC1-like complex.

The protein localises to the nucleus. The protein resides in the cytoplasm. Its subcellular location is the chromosome. The catalysed reaction is Thiol-dependent hydrolysis of ester, thioester, amide, peptide and isopeptide bonds formed by the C-terminal Gly of ubiquitin (a 76-residue protein attached to proteins as an intracellular targeting signal).. Its function is as follows. Protease that can remove conjugated ubiquitin from target proteins and polyubiquitin chains. Inhibits the degradation of target proteins by the proteasome. Cleaves preferentially 'Lys-6' and 'Lys-63'-linked ubiquitin chains. Has lower activity with 'Lys-11' and 'Lys-33'-linked ubiquitin chains, and extremely low activity with 'Lys-27', 'Lys-29' and 'Lys-48'-linked ubiquitin chains (in vitro). Plays a role in the regulation of pathways leading to NF-kappa-B activation. Plays a role in the regulation of DNA repair after double-stranded DNA breaks. Acts as a chromatin regulator via its association with the Polycomb group (PcG) multiprotein PRC1-like complex; may act by deubiquitinating components of the PRC1-like complex. Promotes cell proliferation by deubiquitinating phosphorylated E2F1. This Canis lupus familiaris (Dog) protein is Ubiquitin carboxyl-terminal hydrolase 11 (USP11).